A 160-amino-acid polypeptide reads, in one-letter code: Ureidoglycolate lyase (160 aa).

This sequence belongs to the ureidoglycolate lyase family. In terms of assembly, homodimer. Ni(2+) serves as cofactor.

It catalyses the reaction (S)-ureidoglycolate = urea + glyoxylate. It participates in nitrogen metabolism; (S)-allantoin degradation. In terms of biological role, catalyzes the catabolism of the allantoin degradation intermediate (S)-ureidoglycolate, generating urea and glyoxylate. Involved in the anaerobic utilization of allantoin as sole nitrogen source. Reinforces the induction of genes involved in the degradation of allantoin and glyoxylate by producing glyoxylate. This Escherichia coli O6:H1 (strain CFT073 / ATCC 700928 / UPEC) protein is Ureidoglycolate lyase.